A 405-amino-acid polypeptide reads, in one-letter code: Acetylornithine/succinyldiaminopimelate aminotransferase (405 aa).

Pyridoxal 5'-phosphate is bound by residues 108–109 and phenylalanine 141; that span reads GT. Arginine 144 provides a ligand contact to N(2)-acetyl-L-ornithine. 226 to 229 is a binding site for pyridoxal 5'-phosphate; the sequence is DEVQ. At lysine 255 the chain carries N6-(pyridoxal phosphate)lysine. Residue serine 283 coordinates N(2)-acetyl-L-ornithine. Threonine 284 is a pyridoxal 5'-phosphate binding site.

It belongs to the class-III pyridoxal-phosphate-dependent aminotransferase family. ArgD subfamily. In terms of assembly, homodimer. It depends on pyridoxal 5'-phosphate as a cofactor.

The protein localises to the cytoplasm. The catalysed reaction is N(2)-acetyl-L-ornithine + 2-oxoglutarate = N-acetyl-L-glutamate 5-semialdehyde + L-glutamate. It carries out the reaction N-succinyl-(2S,6S)-2,6-diaminopimelate + 2-oxoglutarate = (S)-2-succinylamino-6-oxoheptanedioate + L-glutamate. The protein operates within amino-acid biosynthesis; L-arginine biosynthesis; N(2)-acetyl-L-ornithine from L-glutamate: step 4/4. Its pathway is amino-acid biosynthesis; L-lysine biosynthesis via DAP pathway; LL-2,6-diaminopimelate from (S)-tetrahydrodipicolinate (succinylase route): step 2/3. Inhibited by gabaculine (Gcn). Its function is as follows. Involved in both the arginine and lysine biosynthetic pathways. The chain is Acetylornithine/succinyldiaminopimelate aminotransferase from Salmonella typhimurium (strain LT2 / SGSC1412 / ATCC 700720).